Here is an 826-residue protein sequence, read N- to C-terminus: MARLCRRVPCTLLLGLAVVLLKARLVPAAARAELSRSDLSLIQQQQQQQQQQQQQQKQLEEAEEERTEVPGATSTLTVPVSVFMLKVQVNDIISRQYLSQAVVEVFVNYTKTNSTVTKSNGAVLIKVPYKLGLSLTIIAYKDGYVLTPLPWKTRRMPIYSSVTLSLFPQSQANIWLFEDTVLITGKLADAKSQPSVQFSKALIKLPDNHHISNVTGYLTVLQQFLKVDNFLHTTGITLNKPGFENIELTPLAAICVKIYSGGKELKVNGSIQVSLPLLRLNDISAGDRIPAWTFDMNTGAWVNHGRGMVKEHNNHLIWTYDAPHLGYWIAAPLPGTRGSGINEDSKDITAYHTVFLTAILGGTIVIVIGFFAVLLCYCRDKCGTPQKRERNITKLEVLKRDQTTSTTHINHISTVKVALKAEDKSQLFNAKNSSYSPQKKEPSKAETEERVSMVKTRDDFKIYNEDVSFLSVNQNNYSRNPTQSLEPNVGSKQPKHINNNLSSSLGDAQDEKRYLTGNEEAYGRSHIPEQLMHIYSQPIAILQTSDLFSTPEQLHTAKSATLPRKGQLVYGQLMEPVNRENFTQTLPKMPIHSHAQPPDAREEDIILEGQQSLPSQASDWSRYSSSLLESVSVPGTLNEAVVMTPFSSELQGISEQTLLELSKGKPSPHPRAWFVSLDGKPVAQVRHSFIDLKKGKRTQSNDTSLDSGVDMNELHSSRKLEREKTFIKSMHQPKILYLEDLDLSSSESGTTVCSPEDPALRHILDGGSGVIMEHPGEESPGRKSTVEDFEANTSPTKRRGRPPLAKRDSKTNIWKKREERPLIPIN.

The signal sequence occupies residues 1-32; it reads MARLCRRVPCTLLLGLAVVLLKARLVPAAARA. Residues 33–353 are Extracellular-facing; that stretch reads ELSRSDLSLI…DSKDITAYHT (321 aa). Positions 52-71 are disordered; the sequence is QQQQQKQLEEAEEERTEVPG. Asn108, Asn113, Asn213, and Asn268 each carry an N-linked (GlcNAc...) asparagine glycan. A helical transmembrane segment spans residues 354 to 374; the sequence is VFLTAILGGTIVIVIGFFAVL. Topologically, residues 375-826 are cytoplasmic; it reads LCYCRDKCGT…REERPLIPIN (452 aa). Disordered stretches follow at residues 429–448, 474–493, and 774–826; these read NAKN…AETE, QNNY…GSKQ, and HPGE…IPIN. Basic and acidic residues predominate over residues 438-448; the sequence is QKKEPSKAETE. Residues 474 to 486 show a composition bias toward polar residues; it reads QNNYSRNPTQSLE. The segment covering 774–786 has biased composition (basic and acidic residues); it reads HPGEESPGRKSTV. A Phosphoserine modification is found at Ser794. The segment covering 805–826 has biased composition (basic and acidic residues); sequence AKRDSKTNIWKKREERPLIPIN.

Belongs to the FAM171 family.

Its subcellular location is the cytoplasmic granule. It localises to the membrane. This is Protein FAM171B (FAM171B) from Homo sapiens (Human).